Reading from the N-terminus, the 340-residue chain is Ketol-acid reductoisomerase (NADP(+)) (340 aa).

The region spanning Ile3 to Thr183 is the KARI N-terminal Rossmann domain. NADP(+) is bound by residues Phe26 to Gln29, Ser54, and Asp84 to Gln87. His109 is a catalytic residue. Gly135 lines the NADP(+) pocket. The KARI C-terminal knotted domain occupies Thr184 to Ile329. Residues Asp192, Glu196, Glu228, and Glu232 each coordinate Mg(2+). Ser253 provides a ligand contact to substrate.

Belongs to the ketol-acid reductoisomerase family. Mg(2+) is required as a cofactor.

It catalyses the reaction (2R)-2,3-dihydroxy-3-methylbutanoate + NADP(+) = (2S)-2-acetolactate + NADPH + H(+). The catalysed reaction is (2R,3R)-2,3-dihydroxy-3-methylpentanoate + NADP(+) = (S)-2-ethyl-2-hydroxy-3-oxobutanoate + NADPH + H(+). It participates in amino-acid biosynthesis; L-isoleucine biosynthesis; L-isoleucine from 2-oxobutanoate: step 2/4. Its pathway is amino-acid biosynthesis; L-valine biosynthesis; L-valine from pyruvate: step 2/4. Its function is as follows. Involved in the biosynthesis of branched-chain amino acids (BCAA). Catalyzes an alkyl-migration followed by a ketol-acid reduction of (S)-2-acetolactate (S2AL) to yield (R)-2,3-dihydroxy-isovalerate. In the isomerase reaction, S2AL is rearranged via a Mg-dependent methyl migration to produce 3-hydroxy-3-methyl-2-ketobutyrate (HMKB). In the reductase reaction, this 2-ketoacid undergoes a metal-dependent reduction by NADPH to yield (R)-2,3-dihydroxy-isovalerate. In Campylobacter concisus (strain 13826), this protein is Ketol-acid reductoisomerase (NADP(+)).